The chain runs to 364 residues: Medium-wave-sensitive opsin 1 (364 aa).

The segment at 1–24 (MAQRWDPQRLAGGQPQDSHEDSTQ) is disordered. Over 1-52 (MAQRWDPQRLAGGQPQDSHEDSTQSSIFTYTNSNATRGPFEGPNYHIAPRWV) the chain is Extracellular. The segment at 17-43 (DSHEDSTQSSIFTYTNSNATRGPFEGP) is required for 11-cis-retinal regeneration. N34 carries N-linked (GlcNAc...) asparagine glycosylation. A helical membrane pass occupies residues 53–77 (YHITSTWMIIVVIASVFTNGLVLVA). The Cytoplasmic portion of the chain corresponds to 78–89 (TMKFKKLRHPLN). Residues 90 to 115 (WILVNLAIADLAETVIASTISVVNQL) form a helical membrane-spanning segment. Topologically, residues 116–129 (YGYFVLGHPLCVVE) are extracellular. C126 and C203 form a disulfide bridge. Residues 130 to 149 (GYTVSVCGITGLWSLAIISW) form a helical membrane-spanning segment. At 150–168 (ERWLVVCKPFGNMRFDAKL) the chain is on the cytoplasmic side. Residues 169 to 192 (AIVGIAFSWIWSAVWTAPPIFGWS) traverse the membrane as a helical segment. Over 193–218 (RYWPYGLKTSCGPDVFSGTSYPGVQS) the chain is Extracellular. The helical transmembrane segment at 219 to 246 (YMMVLMVTCCIIPLSIIILCYLQVWLAI) threads the bilayer. Over 247–268 (RAVAKQQKESESTQKAEKEVTR) the chain is Cytoplasmic. The helical transmembrane segment at 269-292 (MVVVMVFAYCLCWGPYTFFACFAT) threads the bilayer. Residues 293–300 (ANPGYAFH) are Extracellular-facing. The chain crosses the membrane as a helical span at residues 301–320 (PLVAALPAYFAKSATIYNPI). At K312 the chain carries N6-(retinylidene)lysine. Over 321–364 (IYVFMNRQFRNCILQLFGKKVDDTSELSSASKTEASSVSSVSPA) the chain is Cytoplasmic.

It belongs to the G-protein coupled receptor 1 family. Opsin subfamily. In terms of assembly, monomer. Homodimer. Homotetramer. Post-translationally, O-glycosylated. In terms of processing, phosphorylated on some or all of the serine and threonine residues present in the C-terminal region. Expressed in cone photoreceptor cells.

The protein resides in the membrane. Visual pigments are the light-absorbing molecules that mediate vision. They consist of an apoprotein, opsin, covalently linked to cis-retinal. May increase spectral sensitivity in dim light. This is Medium-wave-sensitive opsin 1 (OPN1MW) from Sciurus carolinensis (Eastern gray squirrel).